Here is a 466-residue protein sequence, read N- to C-terminus: 3-isopropylmalate dehydratase large subunit (466 aa).

The [4Fe-4S] cluster site is built by Cys-347, Cys-408, and Cys-411.

It belongs to the aconitase/IPM isomerase family. LeuC type 1 subfamily. Heterodimer of LeuC and LeuD. [4Fe-4S] cluster is required as a cofactor.

It carries out the reaction (2R,3S)-3-isopropylmalate = (2S)-2-isopropylmalate. It functions in the pathway amino-acid biosynthesis; L-leucine biosynthesis; L-leucine from 3-methyl-2-oxobutanoate: step 2/4. Functionally, catalyzes the isomerization between 2-isopropylmalate and 3-isopropylmalate, via the formation of 2-isopropylmaleate. The sequence is that of 3-isopropylmalate dehydratase large subunit from Herminiimonas arsenicoxydans.